We begin with the raw amino-acid sequence, 170 residues long: MFELTKRIDSNTQDAVFDTLTLPYELRIRGRLKAVTDNGHDVGLFLDRGPVLRNGDLLRASSGEVFSISAADEPVTTAYIENGLPLARLCYHLGNRHVSLAIGVDADGRHWIRFPPDHVLEELAILLGAQLTHHQAPFDPESGAYAHAGREQSHAHSHEHSHADGHTHAH.

Positions 137 to 170 (PFDPESGAYAHAGREQSHAHSHEHSHADGHTHAH) are disordered. Positions 148-170 (AGREQSHAHSHEHSHADGHTHAH) are enriched in basic and acidic residues.

Belongs to the UreE family.

The protein resides in the cytoplasm. Its function is as follows. Involved in urease metallocenter assembly. Binds nickel. Probably functions as a nickel donor during metallocenter assembly. This Pseudoalteromonas translucida (strain TAC 125) protein is Urease accessory protein UreE.